A 310-amino-acid polypeptide reads, in one-letter code: GPN-loop GTPase 2 (310 aa).

N-acetylalanine is present on Ala2. 19–24 lines the GTP pocket; sequence GSGKTT. The Gly-Pro-Asn (GPN)-loop; involved in dimer interface signature appears at 76–78; it reads GPN. Residue 178 to 181 participates in GTP binding; the sequence is SKMD.

Belongs to the GPN-loop GTPase family. Heterodimers with GPN1 or GPN3. Binds to RNA polymerase II (RNAPII).

In terms of biological role, small GTPase required for proper localization of RNA polymerase II and III (RNAPII and RNAPIII). May act at an RNAP assembly step prior to nuclear import. This is GPN-loop GTPase 2 from Homo sapiens (Human).